A 474-amino-acid chain; its full sequence is PTS system MurNAc-GlcNAc-specific EIIBC component (474 aa).

The region spanning 5–87 (ERLAKDITHA…ADQSGATLAE (83 aa)) is the PTS EIIB type-1 domain. Cys-27 functions as the Phosphocysteine intermediate; for EIIB activity in the catalytic mechanism. The PTS EIIC type-1 domain maps to 124–474 (KSIANIFIPL…GTTKEMRNPE (351 aa)). Helical transmembrane passes span 129 to 149 (IFIP…IAAI), 167 to 187 (IVTV…IFTG), 193 to 213 (VFGA…LTGI), 228 to 248 (LAAG…LSMV), 268 to 288 (ITLL…AGFV), 299 to 319 (IIGV…LPLV), 343 to 363 (LLPI…ALWV), 378 to 398 (ALPV…TLPL), 402 to 422 (FFTA…IGHI), and 444 to 464 (LGYI…TYFF).

It is found in the cell membrane. The catalysed reaction is N-acetyl-beta-D-muramate-(1-&gt;4)-N-acetyl-D-glucosamine(out) + N(pros)-phospho-L-histidyl-[protein] = 6-phospho-N-acetyl-beta-D-muramate-(1-&gt;4)-N-acetyl-D-glucosamine(in) + L-histidyl-[protein]. It participates in cell wall biogenesis; peptidoglycan recycling. The phosphoenolpyruvate-dependent sugar phosphotransferase system (sugar PTS), a major carbohydrate active transport system, catalyzes the phosphorylation of incoming sugar substrates concomitantly with their translocation across the cell membrane. This system is involved in the uptake and phosphorylation of MurNAc-GlcNAc, the principle peptidoglycan turnover product of S.aureus, yielding cytoplasmic MurNAc 6P-GlcNAc. The chain is PTS system MurNAc-GlcNAc-specific EIIBC component from Staphylococcus epidermidis (strain ATCC 35984 / DSM 28319 / BCRC 17069 / CCUG 31568 / BM 3577 / RP62A).